Consider the following 573-residue polypeptide: DNA damage-binding protein CMR1 (573 aa).

The segment at 27 to 94 (DSLNDSISRE…EMEKAEERKR (68 aa)) is disordered. Positions 72-152 (TMEDSEEDKQ…EEIKKEEDST (81 aa)) form a coiled coil. Residues 79 to 94 (DKQMREEMEKAEERKR) show a composition bias toward basic and acidic residues. WD repeat units follow at residues 218–259 (ITQQ…DDET), 268–308 (PHGK…STEV), 319–357 (DYPL…KQGE), 361–401 (LHDK…QKNS), 418–456 (HSRL…KLPL), 495–538 (GRWV…LCHL), and 542–573 (DRMT…YLFE).

It belongs to the WD repeat DDB2/WDR76 family.

Its function is as follows. DNA-binding protein that binds to both single- and double-stranded DNA. Binds preferentially to UV-damaged DNA. May be involved in DNA-metabolic processes. The protein is DNA damage-binding protein CMR1 of Meyerozyma guilliermondii (strain ATCC 6260 / CBS 566 / DSM 6381 / JCM 1539 / NBRC 10279 / NRRL Y-324) (Yeast).